Here is a 252-residue protein sequence, read N- to C-terminus: Demethylmenaquinone methyltransferase (252 aa).

Residues Thr64, Asp85, and Asn112 to Ala113 each bind S-adenosyl-L-methionine.

Belongs to the class I-like SAM-binding methyltransferase superfamily. MenG/UbiE family.

The enzyme catalyses a 2-demethylmenaquinol + S-adenosyl-L-methionine = a menaquinol + S-adenosyl-L-homocysteine + H(+). The protein operates within quinol/quinone metabolism; menaquinone biosynthesis; menaquinol from 1,4-dihydroxy-2-naphthoate: step 2/2. Functionally, methyltransferase required for the conversion of demethylmenaquinol (DMKH2) to menaquinol (MKH2). The sequence is that of Demethylmenaquinone methyltransferase from Lactococcus lactis subsp. lactis (strain IL1403) (Streptococcus lactis).